The following is a 1249-amino-acid chain: Minor capsid protein M1249L (1249 aa).

The protein belongs to the asfivirus M1249L family. As to quaternary structure, interacts with the minor capsid protein p17 and with the hexon capsid protein p72 capsomers; these interactions form a rigid zipper structure that stabilizes the capsomers. Interacts with host IRF3.

The protein resides in the virion. It localises to the host cytoplasm. In terms of biological role, together with the penton and the other minor capsid proteins (p17, p49), forms a complicated network immediately below the outer capsid shell, stabilizing the whole capsid. In addition, blocks IFN-beta transactivation mediated by the cGAS-STING pathway and regulates the transcriptional activity of IFN-beta. Mechanistically, suppresses the phosphorylation of host key adapter protein TBK1 and degrades host IRF3 in the cytoplasm. The polypeptide is Minor capsid protein M1249L (African swine fever virus (isolate Tick/South Africa/Pretoriuskop Pr4/1996) (ASFV)).